The sequence spans 309 residues: Probable lipid kinase YegS-like (309 aa).

The DAGKc domain maps to 1-134; sequence MAPSHWRLIL…VDLLRIDADH (134 aa). ATP is bound by residues Thr39, 65–71, and Thr96; that span reads GDGTLSE. Positions 219, 222, and 224 each coordinate Mg(2+). Glu280 (proton acceptor) is an active-site residue.

It belongs to the diacylglycerol/lipid kinase family. YegS lipid kinase subfamily. It depends on Mg(2+) as a cofactor. Ca(2+) serves as cofactor.

The protein localises to the cytoplasm. In terms of biological role, probably phosphorylates lipids; the in vivo substrate is unknown. The chain is Probable lipid kinase YegS-like from Xanthomonas axonopodis pv. citri (strain 306).